The following is a 244-amino-acid chain: Robin (244 aa).

This is Robin from Acanthamoeba polyphaga (Amoeba).